The primary structure comprises 366 residues: Inactive protein RESTRICTED TEV MOVEMENT 2 (366 aa).

A sHSP domain is found at 14–121 (VQYEDFVPKS…LPETSRTEAA (108 aa)). The A-1 repeat unit spans residues 129–133 (LEEKR). The segment at 129 to 220 (LEEKRLLEES…LEERRLEERK (92 aa)) is 6 X 5 AA repeats A of L-E-E-[SKR]-[ERK]. An A-2 repeat occupies 135-139 (LEESR). Residues 156-160 (LEEKE) form an A-3 repeat. The stretch at 163–176 (IRKLQEEAKAKEEA) is one B-1 repeat. Residues 163 to 206 (IRKLQEEAKAKEEAEMRKLQEEAKANEEAAAKKLQEEIEAKEKL) are 3 X 14 AA repeats B of [IMA]-[RK]-K-L-Q-E-E-A-K-A-K-E-[EK]-[LA]. The stretch at 178-191 (MRKLQEEAKANEEA) is one B-2 repeat. The stretch at 193 to 205 (AKKLQEEIEAKEK) is one B-3 repeat. The stretch at 206–210 (LEERK) is one A-4 repeat. An A-5 repeat occupies 211–215 (LEERR). One copy of the A-6 repeat lies at 216 to 220 (LEERK). A helical membrane pass occupies residues 322-342 (LMMNVGVAALVIFALGAYVSY). Residues 345–366 (CSSSSSSSSSSPSSSSSSTKPE) form a disordered region. A compositionally biased stretch (low complexity) spans 346-366 (SSSSSSSSSSPSSSSSSTKPE).

Belongs to the small heat shock protein (HSP20) family.

Its subcellular location is the cell membrane. Its function is as follows. Seems to not be involved in heat resistance. Unable to mediate restriction of long-distance movement of the pathogenic tobacco etch virus (TEV) without causing a hypersensitive response or inducing systemic acquired resistance. The protein is Inactive protein RESTRICTED TEV MOVEMENT 2 (RTM2) of Arabidopsis thaliana (Mouse-ear cress).